The chain runs to 436 residues: Chromosomal replication initiator protein DnaA (436 aa).

The interval 1 to 80 (MSHEAVWQHV…QAPRFELRVV (80 aa)) is domain I, interacts with DnaA modulators. The tract at residues 80–100 (VPGVVVQEDIFQAAPAEAPRP) is domain II. The domain III, AAA+ region stretch occupies residues 101–317 (KLNPKYTFEN…GALMRAIAFA (217 aa)). Residues G145, G147, K148, and T149 each coordinate ATP. A domain IV, binds dsDNA region spans residues 318–436 (SLNGVELTRA…LLRTLREACT (119 aa)).

Belongs to the DnaA family. In terms of assembly, oligomerizes as a right-handed, spiral filament on DNA at oriC.

Its subcellular location is the cytoplasm. The catalysed reaction is ATP + H2O = ADP + phosphate + H(+). In terms of biological role, plays an essential role in the initiation and regulation of chromosomal replication. ATP-DnaA binds to the origin of replication (oriC) to initiate formation of the DNA replication initiation complex once per cell cycle. Binds the DnaA box (a 9 base pair repeat at the origin) and separates the double-stranded (ds)DNA. Forms a right-handed helical filament on oriC DNA; dsDNA binds to the exterior of the filament while single-stranded (ss)DNA is stabiized in the filament's interior. The ATP-DnaA-oriC complex binds and stabilizes one strand of the AT-rich DNA unwinding element (DUE), permitting loading of DNA polymerase. After initiation quickly degrades to an ADP-DnaA complex that is not apt for DNA replication. Binds acidic phospholipids. Functionally, the DnaA box consensus is 5'-TTATC[CA]A[CA]A-3' in this bacterium; oriC consists of 13 clustered DnaA boxes and a 40 base pair AT-rich region. ATP-DnaA binds cooperatively to multiple DnaA boxes, while ADP-DnaA binds with low cooperativity to the individual DnaA boxes. About 16-18 DnaA protein molecules bind their sites in oriC. Has a slow ATPase activity. Binds linear and supercoiled DNA. This is Chromosomal replication initiator protein DnaA from Thermus thermophilus (strain ATCC 27634 / DSM 579 / HB8).